The primary structure comprises 82 residues: DNA-directed RNA polymerase subunit Rpo5 (82 aa).

Belongs to the archaeal Rpo5/eukaryotic RPB5 RNA polymerase subunit family. In terms of assembly, part of the RNA polymerase complex.

The protein localises to the cytoplasm. The catalysed reaction is RNA(n) + a ribonucleoside 5'-triphosphate = RNA(n+1) + diphosphate. Functionally, DNA-dependent RNA polymerase (RNAP) catalyzes the transcription of DNA into RNA using the four ribonucleoside triphosphates as substrates. This Thermococcus kodakarensis (strain ATCC BAA-918 / JCM 12380 / KOD1) (Pyrococcus kodakaraensis (strain KOD1)) protein is DNA-directed RNA polymerase subunit Rpo5.